The primary structure comprises 237 residues: Lectin alpha chain (237 aa).

Positions 8 and 10 each coordinate Mn(2+). Positions 10, 12, 14, and 19 each coordinate Ca(2+). Tyr12 lines the a carbohydrate pocket. 3 residues coordinate Mn(2+): Asp19, His24, and Ser34. 99 to 100 (LY) contributes to the a carbohydrate binding site. Residue Asp208 coordinates Ca(2+). Arg228 is a binding site for a carbohydrate.

It belongs to the leguminous lectin family. In terms of assembly, equilibrium between homodimer and homotetramer. Oligomerization is pH-dependent with homotetramers forming at pH 6.5 and above. The beta and gamma chains are produced by partial proteolytic processing of the lectin alpha chain by an asparaginyl endopeptidase. Mixture of 60% alpha lectin and 40% of its beta and gamma proteolytic fragments. As to expression, seed.

It is found in the vacuole. The protein localises to the aleurone grain. Functionally, D-mannose/D-glucose-binding lectin. Induces histamine release in mast cells from hamster and rat. Induces lymphocyte proliferation and IFNG production. This Macropsychanthus bicolor (Dioclea rostrata) protein is Lectin alpha chain.